Reading from the N-terminus, the 153-residue chain is NAD(P)H-quinone oxidoreductase subunit N (153 aa).

It belongs to the complex I NdhN subunit family. NDH-1 can be composed of about 15 different subunits; different subcomplexes with different compositions have been identified which probably have different functions.

The protein localises to the cellular thylakoid membrane. The enzyme catalyses a plastoquinone + NADH + (n+1) H(+)(in) = a plastoquinol + NAD(+) + n H(+)(out). The catalysed reaction is a plastoquinone + NADPH + (n+1) H(+)(in) = a plastoquinol + NADP(+) + n H(+)(out). In terms of biological role, NDH-1 shuttles electrons from an unknown electron donor, via FMN and iron-sulfur (Fe-S) centers, to quinones in the respiratory and/or the photosynthetic chain. The immediate electron acceptor for the enzyme in this species is believed to be plastoquinone. Couples the redox reaction to proton translocation, and thus conserves the redox energy in a proton gradient. Cyanobacterial NDH-1 also plays a role in inorganic carbon-concentration. The polypeptide is NAD(P)H-quinone oxidoreductase subunit N (Synechococcus sp. (strain RCC307)).